The sequence spans 446 residues: D(1A) dopamine receptor (446 aa).

Residues M1–R23 are Extracellular-facing. N5 is a glycosylation site (N-linked (GlcNAc...) asparagine). The chain crosses the membrane as a helical span at residues I24 to I49. Residues R50 to N60 lie on the Cytoplasmic side of the membrane. A helical transmembrane segment spans residues F61–A87. Residues G88–C96 are Extracellular-facing. Residues C96 and C186 are joined by a disulfide bond. Residues N97–V119 traverse the membrane as a helical segment. The Cytoplasmic portion of the chain corresponds to D120–K138. Residues A139–W163 traverse the membrane as a helical segment. Residues H164–R192 are Extracellular-facing. N175 carries N-linked (GlcNAc...) asparagine glycosylation. Residues T193–Y218 form a helical membrane-spanning segment. Residues R219–K272 are Cytoplasmic-facing. Residues T273 to G299 traverse the membrane as a helical segment. At S300 to T312 the chain is on the extracellular side. A helical transmembrane segment spans residues F313–F337. At R338 to T446 the chain is on the cytoplasmic side. Residues C347 and C351 are each lipidated (S-palmitoyl cysteine).

Belongs to the G-protein coupled receptor 1 family. Interacts with DNAJC14 via its C-terminus. Interacts with DRD2. Interacts with DORIP1.

Its subcellular location is the cell membrane. It localises to the endoplasmic reticulum membrane. The protein resides in the cell projection. It is found in the cilium membrane. The protein localises to the dendrite. Its subcellular location is the dendritic spine. Dopamine receptor whose activity is mediated by G proteins which activate adenylyl cyclase. The chain is D(1A) dopamine receptor (DRD1) from Bos taurus (Bovine).